We begin with the raw amino-acid sequence, 627 residues long: 1-deoxy-D-xylulose-5-phosphate synthase (627 aa).

Thiamine diphosphate-binding positions include His75 and 116–118; that span reads AHS. A Mg(2+)-binding site is contributed by Asp147. Residues 148 to 149, Asn177, Tyr284, and Glu366 contribute to the thiamine diphosphate site; that span reads GA. Residue Asn177 coordinates Mg(2+).

This sequence belongs to the transketolase family. DXPS subfamily. As to quaternary structure, homodimer. Requires Mg(2+) as cofactor. Thiamine diphosphate is required as a cofactor.

It carries out the reaction D-glyceraldehyde 3-phosphate + pyruvate + H(+) = 1-deoxy-D-xylulose 5-phosphate + CO2. It participates in metabolic intermediate biosynthesis; 1-deoxy-D-xylulose 5-phosphate biosynthesis; 1-deoxy-D-xylulose 5-phosphate from D-glyceraldehyde 3-phosphate and pyruvate: step 1/1. Its function is as follows. Catalyzes the acyloin condensation reaction between C atoms 2 and 3 of pyruvate and glyceraldehyde 3-phosphate to yield 1-deoxy-D-xylulose-5-phosphate (DXP). The polypeptide is 1-deoxy-D-xylulose-5-phosphate synthase (Bordetella petrii (strain ATCC BAA-461 / DSM 12804 / CCUG 43448)).